The primary structure comprises 984 residues: DNA polymerase (984 aa).

Residues 804 to 827 (DNPGKKRKSTDDNEGPSPKRRVIT) are bipartite nuclear localization signal. Positions 939-948 (CSVKRKRDDD) are monopartite nuclear localization signal. Residues 943 to 969 (RKRDDDDDNDDDDDDDCDSSDSENDTQ) are disordered. A compositionally biased stretch (acidic residues) spans 947 to 966 (DDDDNDDDDDDDCDSSDSEN).

This sequence belongs to the DNA polymerase type-B family.

The protein resides in the host nucleus. It catalyses the reaction DNA(n) + a 2'-deoxyribonucleoside 5'-triphosphate = DNA(n+1) + diphosphate. Functionally, replicates the viral genome, host DNA polymerases cannot substitute for the viral enzyme in this process. This chain is DNA polymerase (POL), found in Autographa californica nuclear polyhedrosis virus (AcMNPV).